Here is a 189-residue protein sequence, read N- to C-terminus: Elongation factor P (189 aa).

Lysine 34 bears the N6-(3,6-diaminohexanoyl)-5-hydroxylysine mark.

It belongs to the elongation factor P family. May be beta-lysylated on the epsilon-amino group of Lys-34 by the combined action of EpmA and EpmB, and then hydroxylated on the C5 position of the same residue by EpmC (if this protein is present). Lysylation is critical for the stimulatory effect of EF-P on peptide-bond formation. The lysylation moiety may extend toward the peptidyltransferase center and stabilize the terminal 3-CCA end of the tRNA. Hydroxylation of the C5 position on Lys-34 may allow additional potential stabilizing hydrogen-bond interactions with the P-tRNA.

It is found in the cytoplasm. It participates in protein biosynthesis; polypeptide chain elongation. Functionally, involved in peptide bond synthesis. Alleviates ribosome stalling that occurs when 3 or more consecutive Pro residues or the sequence PPG is present in a protein, possibly by augmenting the peptidyl transferase activity of the ribosome. Modification of Lys-34 is required for alleviation. The sequence is that of Elongation factor P from Buchnera aphidicola subsp. Baizongia pistaciae (strain Bp).